The following is a 637-amino-acid chain: Extracellular metalloproteinase MEP (637 aa).

A signal peptide spans 1–21 (MRSVDSLLLLGLTGLASQANA). Positions 22–246 (HPAKRQPNDS…VVGVVDYVAD (225 aa)) are excised as a propeptide. Asn-288 carries an N-linked (GlcNAc...) asparagine glycan. Residue His-431 participates in Zn(2+) binding. Glu-432 is an active-site residue. His-435 contacts Zn(2+).

The protein belongs to the peptidase M36 family. Requires Zn(2+) as cofactor.

The protein resides in the secreted. Its function is as follows. Secreted metalloproteinase that probably acts as a virulence factor. Cleaves Z.mays Endochitinase A (CHIA) between residues 'Gly-29' and 'Cys-30'. The protein is Extracellular metalloproteinase MEP (MEP) of Fusarium vanettenii (strain ATCC MYA-4622 / CBS 123669 / FGSC 9596 / NRRL 45880 / 77-13-4) (Fusarium solani subsp. pisi).